A 317-amino-acid chain; its full sequence is Putative cuticle collagen 80 (317 aa).

Residues 80 to 262 (CNCGPQASNC…GAPGNDGAPG (183 aa)) are disordered. Triple-helical region stretches follow at residues 92–124 (GPPGPPGASGDRGLDGQPGPAGKPGQPGVAGPA), 137–199 (GAPG…SGQR), and 202–264 (GLPG…PGSD). Composition is skewed to low complexity over residues 108–124 (QPGPAGKPGQPGVAGPA), 135–145 (PQGAPGPAGAP), and 175–206 (AGDAGSPGQAGAPGNPGRPGQSGQRSRGLPGP). Composition is skewed to pro residues over residues 207–219 (SGRPGPQGPPGAP) and 230–240 (PAGPPGPPGPN). Low complexity predominate over residues 242 to 262 (QPGHPGQDGQPGAPGNDGAPG).

This sequence belongs to the cuticular collagen family. In terms of assembly, collagen polypeptide chains are complexed within the cuticle by disulfide bonds and other types of covalent cross-links.

In terms of biological role, nematode cuticles are composed largely of collagen-like proteins. The cuticle functions both as an exoskeleton and as a barrier to protect the worm from its environment. This is Putative cuticle collagen 80 (col-80) from Caenorhabditis elegans.